The sequence spans 441 residues: Ubiquitin carboxyl-terminal hydrolase MINDY-3 (441 aa).

The Nucleophile role is filled by cysteine 51. Histidine 284 (proton acceptor) is an active-site residue.

This sequence belongs to the MINDY deubiquitinase family. FAM188 subfamily.

It localises to the nucleus. The catalysed reaction is Thiol-dependent hydrolysis of ester, thioester, amide, peptide and isopeptide bonds formed by the C-terminal Gly of ubiquitin (a 76-residue protein attached to proteins as an intracellular targeting signal).. Its function is as follows. Hydrolase that can remove 'Lys-48'-linked conjugated ubiquitin from proteins. The sequence is that of Ubiquitin carboxyl-terminal hydrolase MINDY-3 (mindy3) from Xenopus tropicalis (Western clawed frog).